The primary structure comprises 302 residues: Beta-lactamase (302 aa).

Residues 1-11 are compositionally biased toward basic residues; the sequence is MADRRRVHAWA. A signal peptide spans 1–29; it reads MADRRRVHAWARARPAAPEPAPPTPSAAA. The disordered stretch occupies residues 1–43; it reads MADRRRVHAWARARPAAPEPAPPTPSAAAPSVAPGPAATPPDP. Low complexity predominate over residues 26–36; sequence SAAAPSVAPGP. Residue Ser85 is the Acyl-ester intermediate of the active site. Ser143 is a binding site for substrate. The active-site Proton acceptor is Glu179. 247–249 lines the substrate pocket; sequence KTG.

This sequence belongs to the class-A beta-lactamase family.

The protein resides in the secreted. It catalyses the reaction a beta-lactam + H2O = a substituted beta-amino acid. Active on penicillins but not on cephalosporins. The protein is Beta-lactamase (bla) of Amycolatopsis lactamdurans (Nocardia lactamdurans).